A 276-amino-acid chain; its full sequence is Protein-glutamine gamma-glutamyltransferase (276 aa).

This sequence belongs to the bacillus TGase family.

It carries out the reaction L-glutaminyl-[protein] + L-lysyl-[protein] = [protein]-L-lysyl-N(6)-5-L-glutamyl-[protein] + NH4(+). Probably plays a role in the assembly of the spore coat proteins by catalyzing epsilon-(gamma-glutamyl)lysine cross-links. This is Protein-glutamine gamma-glutamyltransferase from Bacillus cereus (strain AH820).